The sequence spans 352 residues: MSATASVATRHDWSLAEVRALFEQPFNDLLFQAQTVHRAYFDPNRVQVSTLLSIKTGACPEDCKYCPQSGHYNTGLDKEKLMEVQKVLEAAAEAKAIGSTRFCMGAAWKHPSAKDMPYVLEMVKGVKKLGLETCMTLGRLTQEQTQALADAGLDYYNHNLDTSPEFYGNIITTRTYSERLQTLAYVREAGMKICSGGILGMGESVDDRAGLLIQLANLPEHPESVPINMLVKVKGTPLAEEKDVDPFDFIRTLAVARIMMPKSHVRLSAGREQMNEQMQALAFMAGANSIFYGEKLLTTKNPQAEKDMQLFARLGIKPEEREEHADEVHQAAIEQALVEQRESKLFYNAASA.

One can recognise a Radical SAM core domain in the interval 44 to 262 (NRVQVSTLLS…LAVARIMMPK (219 aa)). 3 residues coordinate [4Fe-4S] cluster: Cys59, Cys63, and Cys66. Residues Cys103, Cys134, Cys194, and Arg266 each coordinate [2Fe-2S] cluster.

It belongs to the radical SAM superfamily. Biotin synthase family. As to quaternary structure, homodimer. [4Fe-4S] cluster is required as a cofactor. Requires [2Fe-2S] cluster as cofactor.

The enzyme catalyses (4R,5S)-dethiobiotin + (sulfur carrier)-SH + 2 reduced [2Fe-2S]-[ferredoxin] + 2 S-adenosyl-L-methionine = (sulfur carrier)-H + biotin + 2 5'-deoxyadenosine + 2 L-methionine + 2 oxidized [2Fe-2S]-[ferredoxin]. Its pathway is cofactor biosynthesis; biotin biosynthesis; biotin from 7,8-diaminononanoate: step 2/2. Catalyzes the conversion of dethiobiotin (DTB) to biotin by the insertion of a sulfur atom into dethiobiotin via a radical-based mechanism. The protein is Biotin synthase of Pseudomonas aeruginosa (strain UCBPP-PA14).